The sequence spans 503 residues: Maturase K (503 aa).

This sequence belongs to the intron maturase 2 family. MatK subfamily.

It localises to the plastid. The protein localises to the chloroplast. Its function is as follows. Usually encoded in the trnK tRNA gene intron. Probably assists in splicing its own and other chloroplast group II introns. This chain is Maturase K, found in Lathyrus vestitus (Pacific pea).